We begin with the raw amino-acid sequence, 38 residues long: Photosystem I reaction center subunit IX (38 aa).

A helical transmembrane segment spans residues 4–24 (FLTAAPVVAAIWFTATAGILI).

Belongs to the PsaJ family.

Its subcellular location is the cellular thylakoid membrane. Its function is as follows. May help in the organization of the PsaE and PsaF subunits. In Synechococcus sp. (strain CC9605), this protein is Photosystem I reaction center subunit IX.